A 142-amino-acid chain; its full sequence is Transcriptional regulator MraZ (142 aa).

2 SpoVT-AbrB domains span residues 5–51 and 77–120; these read ASAL…PRPE and AADV…DAAT.

The protein belongs to the MraZ family. In terms of assembly, forms oligomers.

It localises to the cytoplasm. The protein localises to the nucleoid. This Ralstonia nicotianae (strain ATCC BAA-1114 / GMI1000) (Ralstonia solanacearum) protein is Transcriptional regulator MraZ.